Consider the following 292-residue polypeptide: Enoyl-CoA hydratase domain-containing protein 2, mitochondrial (292 aa).

Residues 1–35 (MLRVLCLLRPWRPLRARGCASDGAAGGSEIQVRAL) constitute a mitochondrion transit peptide. Residue lysine 97 is modified to N6-acetyllysine; alternate. Position 97 is an N6-succinyllysine; alternate (lysine 97).

The protein belongs to the enoyl-CoA hydratase/isomerase family.

It is found in the mitochondrion. The sequence is that of Enoyl-CoA hydratase domain-containing protein 2, mitochondrial (ECHDC2) from Homo sapiens (Human).